The following is a 277-amino-acid chain: Outer membrane lipoprotein 1 (277 aa).

The first 19 residues, 1–19 (MSFKKILGVALVSALALTA), serve as a signal peptide directing secretion. Cys-20 carries N-palmitoyl cysteine lipidation. Residue Cys-20 is the site of S-diacylglycerol cysteine attachment.

The protein belongs to the NlpA lipoprotein family.

The protein resides in the cell outer membrane. In Mannheimia haemolytica (Pasteurella haemolytica), this protein is Outer membrane lipoprotein 1 (plpA).